Reading from the N-terminus, the 174-residue chain is Crossover junction endodeoxyribonuclease RuvC (174 aa).

Residues D16, E76, and D148 contribute to the active site. Residues D16, E76, and D148 each contribute to the Mg(2+) site.

It belongs to the RuvC family. As to quaternary structure, homodimer which binds Holliday junction (HJ) DNA. The HJ becomes 2-fold symmetrical on binding to RuvC with unstacked arms; it has a different conformation from HJ DNA in complex with RuvA. In the full resolvosome a probable DNA-RuvA(4)-RuvB(12)-RuvC(2) complex forms which resolves the HJ. It depends on Mg(2+) as a cofactor.

The protein resides in the cytoplasm. The enzyme catalyses Endonucleolytic cleavage at a junction such as a reciprocal single-stranded crossover between two homologous DNA duplexes (Holliday junction).. Functionally, the RuvA-RuvB-RuvC complex processes Holliday junction (HJ) DNA during genetic recombination and DNA repair. Endonuclease that resolves HJ intermediates. Cleaves cruciform DNA by making single-stranded nicks across the HJ at symmetrical positions within the homologous arms, yielding a 5'-phosphate and a 3'-hydroxyl group; requires a central core of homology in the junction. The consensus cleavage sequence is 5'-(A/T)TT(C/G)-3'. Cleavage occurs on the 3'-side of the TT dinucleotide at the point of strand exchange. HJ branch migration catalyzed by RuvA-RuvB allows RuvC to scan DNA until it finds its consensus sequence, where it cleaves and resolves the cruciform DNA. The protein is Crossover junction endodeoxyribonuclease RuvC of Rhodopseudomonas palustris (strain BisA53).